The sequence spans 462 residues: Cysteine--tRNA ligase (462 aa).

Cys29 provides a ligand contact to Zn(2+). The 'HIGH' region signature appears at 31–41; that stretch reads PTVYDHAHIGN. Zn(2+) is bound by residues Cys214, His239, and Glu243. The 'KMSKS' region signature appears at 272–276; the sequence is KMSKS. Residue Lys275 coordinates ATP.

Belongs to the class-I aminoacyl-tRNA synthetase family. Monomer. The cofactor is Zn(2+).

It localises to the cytoplasm. The catalysed reaction is tRNA(Cys) + L-cysteine + ATP = L-cysteinyl-tRNA(Cys) + AMP + diphosphate. This Azorhizobium caulinodans (strain ATCC 43989 / DSM 5975 / JCM 20966 / LMG 6465 / NBRC 14845 / NCIMB 13405 / ORS 571) protein is Cysteine--tRNA ligase.